The following is a 298-amino-acid chain: Peroxisomal 2,4-dienoyl-CoA reductase [(3E)-enoyl-CoA-producing] (298 aa).

19–24 serves as a coordination point for NADP(+); it reads GGGSGI. Arginine 44 contributes to the substrate binding site. An NADP(+)-binding site is contributed by aspartate 69. Substrate is bound by residues arginine 71, phenylalanine 101, and 109 to 111; that span reads SPN. Residues lysine 173 and 200 to 206 each bind NADP(+); that span reads PGPIGGT. A disordered region spans residues 279-298; the sequence is SRAVEKRSRAKPVGLPTSKL. The Microbody targeting signal signature appears at 296 to 298; sequence SKL.

The protein belongs to the short-chain dehydrogenases/reductases (SDR) family. 2,4-dienoyl-CoA reductase subfamily.

The protein resides in the peroxisome. The catalysed reaction is a (2E,4Z)-dienoyl-CoA + NADPH + H(+) = a 4,5-saturated-(3E)-enoyl-CoA + NADP(+). It carries out the reaction a (2E,4E)-dienoyl-CoA + NADPH + H(+) = a 4,5-saturated-(3E)-enoyl-CoA + NADP(+). Functionally, auxiliary enzyme of beta-oxidation. Participates in the degradation of unsaturated fatty enoyl-CoA esters having double bonds in both even- and odd-numbered positions in peroxisome. Catalyzes the NADP-dependent reduction of 2,4-dienoyl-CoA to yield trans-3-enoyl-CoA. In Arabidopsis thaliana (Mouse-ear cress), this protein is Peroxisomal 2,4-dienoyl-CoA reductase [(3E)-enoyl-CoA-producing].